Reading from the N-terminus, the 185-residue chain is Transcriptional repressor NrdR (185 aa).

Residues 1–24 (MRCPFCGGPDTQVKDSRPSEDSSA) form a disordered region. Residues 3–34 (CPFCGGPDTQVKDSRPSEDSSAIRRRRVCPDC) fold into a zinc finger. The segment covering 12–24 (QVKDSRPSEDSSA) has biased composition (basic and acidic residues). Residues 49 to 139 (LVVLKRSGKR…VYKNFREAQD (91 aa)) form the ATP-cone domain. Residues 149-185 (ERLEGEGDLPEDGEAAPAPPDEVVAAPRRGRPARKRA) are disordered. Residues 176–185 (RRGRPARKRA) show a composition bias toward basic residues.

This sequence belongs to the NrdR family. It depends on Zn(2+) as a cofactor.

In terms of biological role, negatively regulates transcription of bacterial ribonucleotide reductase nrd genes and operons by binding to NrdR-boxes. The chain is Transcriptional repressor NrdR from Methylorubrum extorquens (strain PA1) (Methylobacterium extorquens).